The primary structure comprises 727 residues: Glycerol-3-phosphate dehydrogenase, mitochondrial (727 aa).

A mitochondrion-targeting transit peptide spans 1–42 (MAFQKAVKGTILVGGGALATVLGLSQFAHYRRKQMNLAYVKA). Position 71 to 99 (71 to 99 (DILVIGGGATGSGCALDAVTRGLKTALVE)) interacts with FAD. Position 601 is a phosphotyrosine (Y601). EF-hand domains are found at residues 623–658 (SDID…INVQ) and 659–694 (MDEN…IQKG). The Ca(2+) site is built by D672, N674, N676, Q678, and E683.

This sequence belongs to the FAD-dependent glycerol-3-phosphate dehydrogenase family. FAD serves as cofactor.

It localises to the mitochondrion. It carries out the reaction a quinone + sn-glycerol 3-phosphate = dihydroxyacetone phosphate + a quinol. The protein operates within polyol metabolism; glycerol degradation via glycerol kinase pathway; glycerone phosphate from sn-glycerol 3-phosphate (anaerobic route): step 1/1. Its activity is regulated as follows. Calcium-binding enhance the activity of the enzyme. Calcium-responsive mitochondrial glycerol-3-phosphate dehydrogenase which seems to be a key component of the pancreatic beta-cell glucose-sensing device. This chain is Glycerol-3-phosphate dehydrogenase, mitochondrial, found in Homo sapiens (Human).